A 409-amino-acid polypeptide reads, in one-letter code: tRNA(Met) cytidine acetate ligase (409 aa).

ATP is bound by residues 7–20 (VVEY…HLHH), Gly102, Asn169, and Arg194.

This sequence belongs to the TmcAL family.

It is found in the cytoplasm. The enzyme catalyses cytidine(34) in elongator tRNA(Met) + acetate + ATP = N(4)-acetylcytidine(34) in elongator tRNA(Met) + AMP + diphosphate. Catalyzes the formation of N(4)-acetylcytidine (ac(4)C) at the wobble position of elongator tRNA(Met), using acetate and ATP as substrates. First activates an acetate ion to form acetyladenylate (Ac-AMP) and then transfers the acetyl group to tRNA to form ac(4)C34. The chain is tRNA(Met) cytidine acetate ligase from Clostridium botulinum (strain Loch Maree / Type A3).